The primary structure comprises 137 residues: Large ribosomal subunit protein uL16 (137 aa).

This sequence belongs to the universal ribosomal protein uL16 family. Part of the 50S ribosomal subunit.

Functionally, binds 23S rRNA and is also seen to make contacts with the A and possibly P site tRNAs. This Halorhodospira halophila (strain DSM 244 / SL1) (Ectothiorhodospira halophila (strain DSM 244 / SL1)) protein is Large ribosomal subunit protein uL16.